The sequence spans 820 residues: Trimethylamine-N-oxide reductase (820 aa).

A signal peptide (tat-type signal) is located at residues 1–33; it reads MAITRRSFLKGVATTSAASIIGPSLLTSVSAQA. Position 179 (serine 179) interacts with Mo-bis(molybdopterin guanine dinucleotide).

This sequence belongs to the prokaryotic molybdopterin-containing oxidoreductase family. It depends on Mo-bis(molybdopterin guanine dinucleotide) as a cofactor. Predicted to be exported by the Tat system. The position of the signal peptide cleavage has not been experimentally proven.

It is found in the periplasm. It catalyses the reaction trimethylamine + 2 Fe(III)-[cytochrome c] + H2O = trimethylamine N-oxide + 2 Fe(II)-[cytochrome c] + 3 H(+). Functionally, reduces trimethylamine-N-oxide (TMAO) into trimethylamine; an anaerobic reaction coupled to energy-yielding reactions. This chain is Trimethylamine-N-oxide reductase (torA), found in Vibrio cholerae serotype O1 (strain ATCC 39315 / El Tor Inaba N16961).